The following is a 166-amino-acid chain: Large ribosomal subunit protein uL10 (166 aa).

This sequence belongs to the universal ribosomal protein uL10 family. In terms of assembly, part of the ribosomal stalk of the 50S ribosomal subunit. The N-terminus interacts with L11 and the large rRNA to form the base of the stalk. The C-terminus forms an elongated spine to which L12 dimers bind in a sequential fashion forming a multimeric L10(L12)X complex.

Its function is as follows. Forms part of the ribosomal stalk, playing a central role in the interaction of the ribosome with GTP-bound translation factors. In Streptococcus agalactiae serotype V (strain ATCC BAA-611 / 2603 V/R), this protein is Large ribosomal subunit protein uL10.